The sequence spans 422 residues: Adenosylhomocysteinase (422 aa).

Residues Asp129 and Glu154 each contribute to the substrate site. An NAD(+)-binding site is contributed by 155 to 157 (TTT). Positions 184 and 188 each coordinate substrate. NAD(+)-binding positions include Asn189, 218–223 (GYGWCG), Glu241, Asn276, 297–299 (AGH), and Asn344.

The protein belongs to the adenosylhomocysteinase family. Requires NAD(+) as cofactor.

Its subcellular location is the cytoplasm. It catalyses the reaction S-adenosyl-L-homocysteine + H2O = L-homocysteine + adenosine. Its pathway is amino-acid biosynthesis; L-homocysteine biosynthesis; L-homocysteine from S-adenosyl-L-homocysteine: step 1/1. Its function is as follows. May play a key role in the regulation of the intracellular concentration of adenosylhomocysteine. The chain is Adenosylhomocysteinase from Pyrococcus abyssi (strain GE5 / Orsay).